The chain runs to 127 residues: MKNPESSGVSSSPQIQRVSPSSSSTSPSPPSIGTSSCFTLSSCTLPIAAVVVAVDVVDIMSVDPLAMTSAFSISSLPTTGPLGTIAVDSITLLYTPICLCYLLVRLRKVNFEGNKLLMVSVVNFVPL.

The interval 1–34 (MKNPESSGVSSSPQIQRVSPSSSSTSPSPPSIGT) is disordered. A compositionally biased stretch (low complexity) spans 9–34 (VSSSPQIQRVSPSSSSTSPSPPSIGT). Helical transmembrane passes span 47 to 67 (IAAVVVAVDVVDIMSVDPLAM) and 84 to 104 (TIAVDSITLLYTPICLCYLLV).

Its subcellular location is the membrane. This is an uncharacterized protein from Saccharomyces cerevisiae (strain ATCC 204508 / S288c) (Baker's yeast).